Reading from the N-terminus, the 455-residue chain is Bifunctional protein GlmU (455 aa).

The tract at residues 1-230 (MSNRFAVILA…VEETLGVNDR (230 aa)) is pyrophosphorylase. Residues 9–12 (LAAG), K23, Q73, and 78–79 (GT) contribute to the UDP-N-acetyl-alpha-D-glucosamine site. Position 103 (D103) interacts with Mg(2+). UDP-N-acetyl-alpha-D-glucosamine is bound by residues G140, E155, N170, and N228. Residue N228 coordinates Mg(2+). The segment at 231-251 (VALAQAEQVMKRRINEAWMRK) is linker. The segment at 252–455 (GVTFIDPEQT…KEHYVTKKNN (204 aa)) is N-acetyltransferase. UDP-N-acetyl-alpha-D-glucosamine is bound by residues R333 and K351. H363 functions as the Proton acceptor in the catalytic mechanism. The UDP-N-acetyl-alpha-D-glucosamine site is built by Y366 and N377. Acetyl-CoA-binding positions include 386-387 (NY), A423, and R440.

It in the N-terminal section; belongs to the N-acetylglucosamine-1-phosphate uridyltransferase family. This sequence in the C-terminal section; belongs to the transferase hexapeptide repeat family. As to quaternary structure, homotrimer. Requires Mg(2+) as cofactor.

It localises to the cytoplasm. The enzyme catalyses alpha-D-glucosamine 1-phosphate + acetyl-CoA = N-acetyl-alpha-D-glucosamine 1-phosphate + CoA + H(+). It catalyses the reaction N-acetyl-alpha-D-glucosamine 1-phosphate + UTP + H(+) = UDP-N-acetyl-alpha-D-glucosamine + diphosphate. It functions in the pathway nucleotide-sugar biosynthesis; UDP-N-acetyl-alpha-D-glucosamine biosynthesis; N-acetyl-alpha-D-glucosamine 1-phosphate from alpha-D-glucosamine 6-phosphate (route II): step 2/2. It participates in nucleotide-sugar biosynthesis; UDP-N-acetyl-alpha-D-glucosamine biosynthesis; UDP-N-acetyl-alpha-D-glucosamine from N-acetyl-alpha-D-glucosamine 1-phosphate: step 1/1. The protein operates within bacterial outer membrane biogenesis; LPS lipid A biosynthesis. Catalyzes the last two sequential reactions in the de novo biosynthetic pathway for UDP-N-acetylglucosamine (UDP-GlcNAc). The C-terminal domain catalyzes the transfer of acetyl group from acetyl coenzyme A to glucosamine-1-phosphate (GlcN-1-P) to produce N-acetylglucosamine-1-phosphate (GlcNAc-1-P), which is converted into UDP-GlcNAc by the transfer of uridine 5-monophosphate (from uridine 5-triphosphate), a reaction catalyzed by the N-terminal domain. This Halalkalibacterium halodurans (strain ATCC BAA-125 / DSM 18197 / FERM 7344 / JCM 9153 / C-125) (Bacillus halodurans) protein is Bifunctional protein GlmU.